Here is a 271-residue protein sequence, read N- to C-terminus: Phosphate import ATP-binding protein PstB 2 (271 aa).

The segment at 1 to 20 (MLTKKPEINTILQTTPDPHS) is disordered. An ABC transporter domain is found at 25–266 (MATEDLHVYY…PQEKQTEDYI (242 aa)). 57–64 (GPSGCGKS) is an ATP binding site.

The protein belongs to the ABC transporter superfamily. Phosphate importer (TC 3.A.1.7) family. In terms of assembly, the complex is composed of two ATP-binding proteins (PstB), two transmembrane proteins (PstC and PstA) and a solute-binding protein (PstS).

Its subcellular location is the cell membrane. It carries out the reaction phosphate(out) + ATP + H2O = ADP + 2 phosphate(in) + H(+). Functionally, part of the ABC transporter complex PstSACB involved in phosphate import. Responsible for energy coupling to the transport system. The sequence is that of Phosphate import ATP-binding protein PstB 2 from Listeria innocua serovar 6a (strain ATCC BAA-680 / CLIP 11262).